The chain runs to 159 residues: Nucleotide-binding protein PSPTO_4393 (159 aa).

The protein belongs to the YajQ family.

Nucleotide-binding protein. This Pseudomonas syringae pv. tomato (strain ATCC BAA-871 / DC3000) protein is Nucleotide-binding protein PSPTO_4393.